Consider the following 62-residue polypeptide: Potassium channel toxin alpha-KTx Tx308 (62 aa).

The signal sequence occupies residues 1–18 (MQKLFIVLLLFCILRLDA). 3 cysteine pairs are disulfide-bonded: Cys-28–Cys-46, Cys-33–Cys-59, and Cys-37–Cys-61.

This sequence belongs to the short scorpion toxin superfamily. Potassium channel inhibitor family. Alpha-KTx 23 subfamily. Expressed by the venom gland.

Its subcellular location is the secreted. In terms of biological role, may block potassium channels. The polypeptide is Potassium channel toxin alpha-KTx Tx308 (Buthus israelis (Israeli scorpion)).